The primary structure comprises 195 residues: Recombination protein RecR (195 aa).

Residues 53–68 (CPVCFNIDVKSPCSIC) form a C4-type zinc finger. The Toprim domain maps to 76-171 (QLLCIVEELG…KVTRLACGIP (96 aa)).

Belongs to the RecR family.

May play a role in DNA repair. It seems to be involved in an RecBC-independent recombinational process of DNA repair. It may act with RecF and RecO. In Ehrlichia chaffeensis (strain ATCC CRL-10679 / Arkansas), this protein is Recombination protein RecR.